A 121-amino-acid polypeptide reads, in one-letter code: MKLTRKQATQRRHRRVRRKVFGTSERPRLAVFRSHQHIYAQIIDDTQHRTLAASSTLEPSVKNSELSSTSTCAASAIVGQLIAKKALEKGITQVVFDRGGKIYHGRVRTLAEAAREAGLQF.

The protein belongs to the universal ribosomal protein uL18 family. Part of the 50S ribosomal subunit; contacts the 5S rRNA.

The protein localises to the plastid. It localises to the cyanelle. In terms of biological role, binds 5S rRNA, forms part of the central protuberance of the 50S subunit. The sequence is that of Large ribosomal subunit protein uL18c (rpl18) from Cyanophora paradoxa.